Reading from the N-terminus, the 309-residue chain is Protein FdhE (309 aa).

The protein belongs to the FdhE family.

It is found in the cytoplasm. Functionally, necessary for formate dehydrogenase activity. The chain is Protein FdhE from Escherichia coli O45:K1 (strain S88 / ExPEC).